The sequence spans 331 residues: Phosphate acyltransferase (331 aa).

It belongs to the PlsX family. As to quaternary structure, homodimer. Probably interacts with PlsY.

The protein localises to the cytoplasm. The enzyme catalyses a fatty acyl-[ACP] + phosphate = an acyl phosphate + holo-[ACP]. Its pathway is lipid metabolism; phospholipid metabolism. Catalyzes the reversible formation of acyl-phosphate (acyl-PO(4)) from acyl-[acyl-carrier-protein] (acyl-ACP). This enzyme utilizes acyl-ACP as fatty acyl donor, but not acyl-CoA. The sequence is that of Phosphate acyltransferase from Ureaplasma parvum serovar 3 (strain ATCC 27815 / 27 / NCTC 11736).